A 734-amino-acid chain; its full sequence is MALRFPRFSQGLAQDPTTRRIWFGIATAHDFESHDDITEERLYQNIFASHFGQLAIIFLWTSGNLFHVAWQGNFESWVQDPLHVRPIAHTIWDPHFGQPAVEAFTRGGALGPVNIAYSGVYQWWYTIGLRTNEDLYTGALFLLFISAISLVGGWLHLQPKWKPSVSWFKNAESRLNHHLSGLFGVSSLAWAGHLVHVAIPGSRGEYVRWNNFLDVLPYPQGLGPLFTGQWNLYAQNPDSSSHLFGTSQGAGTAILTLLGGFHPQTQSLWLTDIAHHHLAIAFIFLVAGHMYRTNFGIGHSIKDLLEAHIPPGGRLGRGHKGLYDTINNSIHFQLGLALASLGVITSLVAQHMYSLPAYAFIAQDFTTQAALYTHHQYIAGFIMTGAFAHGAIFFIRDYNPQQNEDNVLARMLDHKEAIISHLSWASLFLGFHTLGLYVHNDVMLAFGTPEKQILIEPIFAQWIQSAHGKTSYGFDVLLSSTNGPAFNAGQSLWLPGWLNAINENRNSLFLTIGPGDFLVHHAIALGLHTTTLILVKGALDARGSKLMPDKKDFGYSFPCDGPGRGGTCDISAWDAFYLAVFWMLNTIGWVTFYWHWKHITLWQGNVSQFNESSTYLMGWLRDYLWLNSSQLINGYNPFGMNSLSVWAWMFLFGHLVWATGFMFLISWRGYWQELIETLAWAHERTPLANLIRWRDKPVALSIVQARLVGLAHFSVGYIFTYAAFLIASTSGKFG.

A run of 8 helical transmembrane segments spans residues 46 to 69 (IFAS…FHVA), 135 to 158 (LYTG…LHLQ), 175 to 199 (LNHH…HVAI), 273 to 291 (IAHH…GHMY), 330 to 353 (IHFQ…QHMY), 369 to 395 (AALY…IFFI), 417 to 439 (AIIS…LYVH), and 517 to 535 (FLVH…LILV). 2 residues coordinate [4Fe-4S] cluster: cysteine 559 and cysteine 568. Transmembrane regions (helical) follow at residues 575-596 (AFYL…YWHW) and 643-665 (LSVW…MFLI). Positions 654, 662, and 670 each coordinate chlorophyll a. Tryptophan 671 lines the phylloquinone pocket. A helical transmembrane segment spans residues 707-727 (LVGLAHFSVGYIFTYAAFLIA).

This sequence belongs to the PsaA/PsaB family. In terms of assembly, the PsaA/B heterodimer binds the P700 chlorophyll special pair and subsequent electron acceptors. PSI consists of a core antenna complex that captures photons, and an electron transfer chain that converts photonic excitation into a charge separation. The eukaryotic PSI reaction center is composed of at least 11 subunits. It depends on P700 is a chlorophyll a/chlorophyll a' dimer, A0 is one or more chlorophyll a, A1 is one or both phylloquinones and FX is a shared 4Fe-4S iron-sulfur center. as a cofactor.

The protein resides in the plastid. Its subcellular location is the chloroplast thylakoid membrane. It catalyses the reaction reduced [plastocyanin] + hnu + oxidized [2Fe-2S]-[ferredoxin] = oxidized [plastocyanin] + reduced [2Fe-2S]-[ferredoxin]. PsaA and PsaB bind P700, the primary electron donor of photosystem I (PSI), as well as the electron acceptors A0, A1 and FX. PSI is a plastocyanin-ferredoxin oxidoreductase, converting photonic excitation into a charge separation, which transfers an electron from the donor P700 chlorophyll pair to the spectroscopically characterized acceptors A0, A1, FX, FA and FB in turn. Oxidized P700 is reduced on the lumenal side of the thylakoid membrane by plastocyanin. In Nymphaea alba (White water-lily), this protein is Photosystem I P700 chlorophyll a apoprotein A2.